A 335-amino-acid polypeptide reads, in one-letter code: Phosphate acyltransferase (335 aa).

Belongs to the PlsX family. As to quaternary structure, homodimer. Probably interacts with PlsY.

Its subcellular location is the cytoplasm. It carries out the reaction a fatty acyl-[ACP] + phosphate = an acyl phosphate + holo-[ACP]. It participates in lipid metabolism; phospholipid metabolism. Functionally, catalyzes the reversible formation of acyl-phosphate (acyl-PO(4)) from acyl-[acyl-carrier-protein] (acyl-ACP). This enzyme utilizes acyl-ACP as fatty acyl donor, but not acyl-CoA. The protein is Phosphate acyltransferase of Clostridium botulinum (strain ATCC 19397 / Type A).